The sequence spans 97 residues: Nuclear protein 2 (97 aa).

The tract at residues 76 to 97 (LLNGQRKRRQRQLHPKMRTRLT) is disordered. Residues 80–97 (QRKRRQRQLHPKMRTRLT) show a composition bias toward basic residues.

It belongs to the NUPR family.

The protein localises to the nucleus. Its function is as follows. Acts as a transcriptional repressor by inhibiting gene expression at the NUPR1 promoter in a p53/TP53-dependent manner in cancer cells. Involved in the G1 cell cycle arrest, and in a decrease in cell viability and cell proliferation. Plays a role as a negative regulator of the protumoral factor NUPR1. In Homo sapiens (Human), this protein is Nuclear protein 2.